We begin with the raw amino-acid sequence, 375 residues long: Alcohol dehydrogenase 1 (375 aa).

Residue Ser2 is modified to N-acetylserine. Zn(2+)-binding residues include Cys47, His68, Cys98, Cys101, Cys104, Cys112, and Cys175. Residues 200 to 205, Asp224, and Lys229 contribute to the NAD(+) site; that span reads GLGGVG. Position 234 is an N6-succinyllysine (Lys234). Residue 293–295 coordinates NAD(+); it reads VGV. N6-succinyllysine is present on Lys340. Arg370 provides a ligand contact to NAD(+).

It belongs to the zinc-containing alcohol dehydrogenase family. Class-I subfamily. Zn(2+) is required as a cofactor.

It localises to the cytoplasm. The enzyme catalyses a primary alcohol + NAD(+) = an aldehyde + NADH + H(+). It catalyses the reaction a secondary alcohol + NAD(+) = a ketone + NADH + H(+). In Peromyscus maniculatus (North American deer mouse), this protein is Alcohol dehydrogenase 1 (ADH1).